The primary structure comprises 523 residues: 2-isopropylmalate synthase (523 aa).

The Pyruvate carboxyltransferase domain maps to 5–267 (VIIFDTTLRD…HTAINHQEIW (263 aa)). Positions 14, 202, 204, and 238 each coordinate Mn(2+). The segment at 392–523 (RLDYFSVQSG…QHNENNKETV (132 aa)) is regulatory domain.

This sequence belongs to the alpha-IPM synthase/homocitrate synthase family. LeuA type 1 subfamily. In terms of assembly, homodimer. Mn(2+) serves as cofactor.

It localises to the cytoplasm. The enzyme catalyses 3-methyl-2-oxobutanoate + acetyl-CoA + H2O = (2S)-2-isopropylmalate + CoA + H(+). Its pathway is amino-acid biosynthesis; L-leucine biosynthesis; L-leucine from 3-methyl-2-oxobutanoate: step 1/4. Catalyzes the condensation of the acetyl group of acetyl-CoA with 3-methyl-2-oxobutanoate (2-ketoisovalerate) to form 3-carboxy-3-hydroxy-4-methylpentanoate (2-isopropylmalate). This is 2-isopropylmalate synthase from Escherichia coli O157:H7.